The sequence spans 473 residues: H(+)/Cl(-) exchange transporter ClcA (473 aa).

Residues 1–32 (MKTDTPTFEAQQIVRLRRGRLIRRLVQRDKTP) lie on the Cytoplasmic side of the membrane. Residues 33–69 (LAILLMAAVVGTLTGLVGVAFEKAVSWVQNMRIGALV) form a helical membrane-spanning segment. At 70-76 (QVADHAF) the chain is on the periplasmic side. A helical transmembrane segment spans residues 77 to 100 (LLWPLAFILSALLAMVGYFLVRKF). Positions 106–110 (GSGIP) match the Selectivity filter part_1 motif. S107 provides a ligand contact to chloride. Residues 109–116 (IPEIEGAL) constitute an intramembrane region (helical). The Cytoplasmic portion of the chain corresponds to 117 to 123 (EELRPVR). Transmembrane regions (helical) follow at residues 124 to 141 (WWRVLPVKFIGGMGTLGA) and 148 to 166 (EGPTVQIGGNLGRMVLDVF). Positions 146 to 150 (GREGP) match the Selectivity filter part_2 motif. At 167 to 176 (RMRSAEARHT) the chain is on the cytoplasmic side. 2 consecutive intramembrane regions (helical) follow at residues 177-189 (LLATGAAAGLSAA) and 193-201 (PLAGILFII). Over 202 to 214 (EEMRPQFRYNLIS) the chain is Cytoplasmic. The chain crosses the membrane as a helical span at residues 215–232 (IKAVFTGVIMSSIVFRIF). The Periplasmic segment spans residues 233 to 252 (NGEAPIIEVGKLSNAPVNTL). A helical membrane pass occupies residues 253-281 (WLYLVLGIIFGCVGPVFNTLVLRTQDMFQ). At 282 to 287 (RFHGGE) the chain is on the cytoplasmic side. The helical transmembrane segment at 288–309 (IKKWVLMGGAIGGLCGILGLIE) threads the bilayer. Over 310 to 329 (PEAAGGGFNLIPIAAAGNFS) the chain is Periplasmic. 2 consecutive transmembrane segments (helical) span residues 330–349 (VGLLLFIFITRVVTTLLCFS) and 355–376 (GIFAPMLALGTLLGTAFGMAAA). The Selectivity filter part_3 motif lies at 355–359 (GIFAP). Residues I356 and F357 each contribute to the chloride site. Topologically, residues 377-386 (VLFPQYHLEA) are periplasmic. Positions 387-401 (GTFAIAGMGALMAAS) form an intramembrane region, helical. Residues 402-404 (VRA) constitute an intramembrane region (note=Loop between two helices). An intramembrane region (helical) is located at residues 405-416 (PLTGIVLVLEMT). The segment at residues 417-421 (DNYQL) is an intramembrane region (note=Loop between two helices). The chain crosses the membrane as a helical span at residues 422–438 (ILPMIITCLGATLLAQF). At 439–473 (LGGKPLYSTILARTLAKQDAEQAAKNQSTPAGENT) the chain is on the cytoplasmic side. Chloride is bound at residue Y445.

The protein belongs to the chloride channel (TC 2.A.49) family. ClcA subfamily. As to quaternary structure, homodimer.

It localises to the cell inner membrane. It catalyses the reaction 2 chloride(in) + H(+)(out) = 2 chloride(out) + H(+)(in). Its function is as follows. Proton-coupled chloride transporter. Functions as antiport system and exchanges two chloride ions for 1 proton. Probably acts as an electrical shunt for an outwardly-directed proton pump that is linked to amino acid decarboxylation, as part of the extreme acid resistance (XAR) response. In Salmonella arizonae (strain ATCC BAA-731 / CDC346-86 / RSK2980), this protein is H(+)/Cl(-) exchange transporter ClcA.